Reading from the N-terminus, the 148-residue chain is Protein E6 (148 aa).

Zinc fingers lie at residues 29-65 (CVFCTKQLTVAELTAFALRELNLVWKAGVPYGACARC) and 102-138 (CYTCHKPLVKEEKDRHRNERRRLHKISGYWRGCCAYC).

The protein belongs to the papillomaviridae E6 protein family. In terms of assembly, forms homodimers. Interacts with ubiquitin-protein ligase UBE3A/E6-AP; this interaction stimulates UBE3A ubiquitin activity. Interacts with host TP53 and EP300; this interaction inhibits TP53 activity.

The protein resides in the host cytoplasm. The protein localises to the host nucleus. Functionally, plays a major role in the induction and maintenance of cellular transformation. E6 associates with host UBE3A/E6-AP ubiquitin-protein ligase and modulates its activity. Sequesters tumor suppressor TP53 in the host cytoplasm and modulates its activity by interacting with host EP300 that results in the reduction of TP53 acetylation and activation. In turn, apoptosis induced by DNA damage is inhibited. E6 also protects host keratinocytes from apoptosis by mediating the degradation of host BAK1. May also inhibit host immune response. This Homo sapiens (Human) protein is Protein E6.